A 481-amino-acid polypeptide reads, in one-letter code: WASH complex subunit 1 (481 aa).

The segment at 1–54 (MVRMTQKRYLEGQVYSVPLIQPDLRREEAVHQITDALQYLEMISTDIFTRVSES) is required for WASH complex assembly. Disordered stretches follow at residues 273–417 (SVPA…SGGD) and 429–481 (RRKG…DWEA). Residues 304–341 (APPPPPPPPPPPPEPTHVPVPPPGTSAAPPPPPPPPPM) are compositionally biased toward pro residues. Residues 359–481 (KGAPSEVVQP…AADDEDDWEA (123 aa)) are VCA. Residues 371 to 393 (GRASLLESIRNAGGIGKANLRNV) enclose the WH2 domain. Over residues 392–407 (NVKERKMEKKKQKEQE) the composition is skewed to basic and acidic residues.

This sequence belongs to the WASH1 family. As to quaternary structure, component of the WASH complex.

The protein localises to the early endosome membrane. The protein resides in the recycling endosome membrane. Functionally, acts as a nucleation-promoting factor at the surface of endosomes, where it recruits and activates the Arp2/3 complex to induce actin polymerization, playing a key role in the fission of tubules that serve as transport intermediates during endosome sorting. This Danio rerio (Zebrafish) protein is WASH complex subunit 1.